Consider the following 456-residue polypeptide: Bifunctional protein GlmU (456 aa).

The interval 1 to 229 is pyrophosphorylase; sequence MLNNAMSVVI…LSEVEGVNNR (229 aa). UDP-N-acetyl-alpha-D-glucosamine-binding positions include 11-14, K25, Q76, 81-82, 103-105, G140, E154, N169, and N227; these read LAAG, GT, and YGD. Residue D105 coordinates Mg(2+). N227 lines the Mg(2+) pocket. Positions 230 to 250 are linker; that stretch reads LQLSRLERVYQSEQAEKLLLA. The interval 251-456 is N-acetyltransferase; that stretch reads GVMLRDPARF…EGWRRPVKKK (206 aa). Residues R333 and K351 each coordinate UDP-N-acetyl-alpha-D-glucosamine. H363 serves as the catalytic Proton acceptor. UDP-N-acetyl-alpha-D-glucosamine is bound by residues Y366 and N377. Acetyl-CoA is bound by residues A380, 386–387, S405, A423, and R440; that span reads NY.

It in the N-terminal section; belongs to the N-acetylglucosamine-1-phosphate uridyltransferase family. This sequence in the C-terminal section; belongs to the transferase hexapeptide repeat family. As to quaternary structure, homotrimer. It depends on Mg(2+) as a cofactor.

Its subcellular location is the cytoplasm. It catalyses the reaction alpha-D-glucosamine 1-phosphate + acetyl-CoA = N-acetyl-alpha-D-glucosamine 1-phosphate + CoA + H(+). It carries out the reaction N-acetyl-alpha-D-glucosamine 1-phosphate + UTP + H(+) = UDP-N-acetyl-alpha-D-glucosamine + diphosphate. Its pathway is nucleotide-sugar biosynthesis; UDP-N-acetyl-alpha-D-glucosamine biosynthesis; N-acetyl-alpha-D-glucosamine 1-phosphate from alpha-D-glucosamine 6-phosphate (route II): step 2/2. It functions in the pathway nucleotide-sugar biosynthesis; UDP-N-acetyl-alpha-D-glucosamine biosynthesis; UDP-N-acetyl-alpha-D-glucosamine from N-acetyl-alpha-D-glucosamine 1-phosphate: step 1/1. It participates in bacterial outer membrane biogenesis; LPS lipid A biosynthesis. Catalyzes the last two sequential reactions in the de novo biosynthetic pathway for UDP-N-acetylglucosamine (UDP-GlcNAc). The C-terminal domain catalyzes the transfer of acetyl group from acetyl coenzyme A to glucosamine-1-phosphate (GlcN-1-P) to produce N-acetylglucosamine-1-phosphate (GlcNAc-1-P), which is converted into UDP-GlcNAc by the transfer of uridine 5-monophosphate (from uridine 5-triphosphate), a reaction catalyzed by the N-terminal domain. In Escherichia fergusonii (strain ATCC 35469 / DSM 13698 / CCUG 18766 / IAM 14443 / JCM 21226 / LMG 7866 / NBRC 102419 / NCTC 12128 / CDC 0568-73), this protein is Bifunctional protein GlmU.